We begin with the raw amino-acid sequence, 157 residues long: MGRLISVSFGLLVVFLSLSGTGADQDCLPGWSFYEGHCYKVFNVKKTWEDAEKFCQKQSNGKHLATIEWLGKANFVADLVTLMNSDPDLDWIGLRVEDKRQQCSSHWTDGSAVSYENVVHNTKCFGLDQKTGYRTWVALRCELAYHFICMSRVPRGA.

An N-terminal signal peptide occupies residues 1 to 23 (MGRLISVSFGLLVVFLSLSGTGA). 3 cysteine pairs are disulfide-bonded: cysteine 27–cysteine 38, cysteine 55–cysteine 149, and cysteine 124–cysteine 141. The 117-residue stretch at 34–150 (YEGHCYKVFN…CELAYHFICM (117 aa)) folds into the C-type lectin domain.

It belongs to the snaclec family. In terms of assembly, heterodimer; disulfide-linked. As to expression, expressed by the venom gland.

The protein localises to the secreted. Its function is as follows. Interferes with one step of hemostasis (modulation of platelet aggregation, or coagulation cascade, for example). In Macrovipera lebetinus (Levantine viper), this protein is Snaclec A16.